We begin with the raw amino-acid sequence, 64 residues long: Bowman-Birk type trypsin inhibitor TI1 (64 aa).

5 disulfides stabilise this stretch: cysteine 9–cysteine 61, cysteine 10–cysteine 25, cysteine 15–cysteine 23, cysteine 32–cysteine 39, and cysteine 36–cysteine 49.

It belongs to the Bowman-Birk serine protease inhibitor family.

This chain is Bowman-Birk type trypsin inhibitor TI1, found in Coix lacryma-jobi (Job's tears).